The following is a 373-amino-acid chain: 4-hydroxy-3-methylbut-2-en-1-yl diphosphate synthase (flavodoxin) (373 aa).

Residues Cys-270, Cys-273, Cys-305, and Glu-312 each coordinate [4Fe-4S] cluster.

Belongs to the IspG family. [4Fe-4S] cluster is required as a cofactor.

It catalyses the reaction (2E)-4-hydroxy-3-methylbut-2-enyl diphosphate + oxidized [flavodoxin] + H2O + 2 H(+) = 2-C-methyl-D-erythritol 2,4-cyclic diphosphate + reduced [flavodoxin]. The protein operates within isoprenoid biosynthesis; isopentenyl diphosphate biosynthesis via DXP pathway; isopentenyl diphosphate from 1-deoxy-D-xylulose 5-phosphate: step 5/6. Its function is as follows. Converts 2C-methyl-D-erythritol 2,4-cyclodiphosphate (ME-2,4cPP) into 1-hydroxy-2-methyl-2-(E)-butenyl 4-diphosphate. The chain is 4-hydroxy-3-methylbut-2-en-1-yl diphosphate synthase (flavodoxin) from Photobacterium profundum (strain SS9).